A 623-amino-acid polypeptide reads, in one-letter code: Kelch-like protein diablo (623 aa).

The tract at residues 1-54 (MGDLPGSGSTAQPRDAAVTGTGGNSTAGGGSSVGSTAVDRPPSPARLSHTSEKH) is disordered. Thr19 carries the post-translational modification Phosphothreonine. Residues 20 to 32 (GTGGNSTAGGGSS) show a composition bias toward gly residues. The BTB domain maps to 72–139 (CDVVLNVGGR…CYTAHIIVEE (68 aa)). The BACK domain maps to 174–276 (CLGIRAFADT…SPKFLVGTVG (103 aa)). Kelch repeat units lie at residues 323 to 369 (VLFA…VLND), 371 to 417 (LYAV…VLDG), 418 to 464 (FLYA…VLGG), 466 to 511 (LYAI…VFNN), 513 to 558 (IYAV…VVNG), and 559 to 605 (QLYA…VMRA).

Its pathway is protein modification; protein ubiquitination. Functionally, probable substrate-specific adapter of an E3 ubiquitin-protein ligase complex which mediates the ubiquitination and subsequent proteasomal degradation of target proteins. May have a role in synapse differentiation and growth. The protein is Kelch-like protein diablo of Drosophila melanogaster (Fruit fly).